The following is a 186-amino-acid chain: MASTLSTITLRSPSPSTASSTHASIPFPKKALEFPIRTPKLHHRRATFLRPLAAVEAPEKVVQLGDEISNLTLADAQKLVEYLQDKLGVTAASFAPAAVAAAPGAAAEAPAVVEEKTEFDVVIDEVPSNARIATIKAVRALTSLALKEAKELIEGLPKKFKEGVSKDEAEDAKKQLEEAGAKVSIA.

Residues 1 to 11 are compositionally biased toward polar residues; sequence MASTLSTITLR. Disordered regions lie at residues 1-23 and 162-186; these read MAST…STHA and EGVS…VSIA. The N-terminal 53 residues, 1–53, are a transit peptide targeting the chloroplast; sequence MASTLSTITLRSPSPSTASSTHASIPFPKKALEFPIRTPKLHHRRATFLRPLA. Residues 12–23 show a composition bias toward low complexity; the sequence is SPSPSTASSTHA. A compositionally biased stretch (basic and acidic residues) spans 162 to 180; that stretch reads EGVSKDEAEDAKKQLEEAG.

It belongs to the bacterial ribosomal protein bL12 family.

Its subcellular location is the plastid. The protein localises to the chloroplast. This chain is Large ribosomal subunit protein bL12c (RPL12), found in Nicotiana tabacum (Common tobacco).